The sequence spans 277 residues: Diaminopimelate epimerase (277 aa).

The substrate site is built by Asn-13, Gln-46, and Asn-66. Cys-75 functions as the Proton donor in the catalytic mechanism. Substrate contacts are provided by residues 76-77 (GN), Asn-159, Asn-192, and 210-211 (ER). The active-site Proton acceptor is Cys-219. 220 to 221 (GT) is a substrate binding site.

The protein belongs to the diaminopimelate epimerase family. As to quaternary structure, homodimer.

Its subcellular location is the cytoplasm. It carries out the reaction (2S,6S)-2,6-diaminopimelate = meso-2,6-diaminopimelate. It functions in the pathway amino-acid biosynthesis; L-lysine biosynthesis via DAP pathway; DL-2,6-diaminopimelate from LL-2,6-diaminopimelate: step 1/1. Catalyzes the stereoinversion of LL-2,6-diaminopimelate (L,L-DAP) to meso-diaminopimelate (meso-DAP), a precursor of L-lysine and an essential component of the bacterial peptidoglycan. The chain is Diaminopimelate epimerase from Azoarcus sp. (strain BH72).